An 81-amino-acid polypeptide reads, in one-letter code: Small ribosomal subunit protein bS20 (81 aa).

The protein belongs to the bacterial ribosomal protein bS20 family.

Functionally, binds directly to 16S ribosomal RNA. The protein is Small ribosomal subunit protein bS20 of Mycoplasma mycoides subsp. mycoides SC (strain CCUG 32753 / NCTC 10114 / PG1).